A 595-amino-acid polypeptide reads, in one-letter code: Aspartate--tRNA(Asp/Asn) ligase (595 aa).

Glu-171 is a binding site for L-aspartate. An aspartate region spans residues 195–198; sequence QLFK. Arg-217 provides a ligand contact to L-aspartate. ATP contacts are provided by residues 217 to 219 and Gln-226; that span reads RDE. His-454 lines the L-aspartate pocket. Glu-488 provides a ligand contact to ATP. Position 495 (Arg-495) interacts with L-aspartate. Residue 540–543 coordinates ATP; that stretch reads GLDR.

It belongs to the class-II aminoacyl-tRNA synthetase family. Type 1 subfamily. Homodimer.

The protein localises to the cytoplasm. It catalyses the reaction tRNA(Asx) + L-aspartate + ATP = L-aspartyl-tRNA(Asx) + AMP + diphosphate. Its function is as follows. Aspartyl-tRNA synthetase with relaxed tRNA specificity since it is able to aspartylate not only its cognate tRNA(Asp) but also tRNA(Asn). Reaction proceeds in two steps: L-aspartate is first activated by ATP to form Asp-AMP and then transferred to the acceptor end of tRNA(Asp/Asn). The chain is Aspartate--tRNA(Asp/Asn) ligase from Bordetella petrii (strain ATCC BAA-461 / DSM 12804 / CCUG 43448).